We begin with the raw amino-acid sequence, 205 residues long: Nitrophorin-7 (205 aa).

The signal sequence occupies residues 1 to 20 (MELYTALLAVTILSPSSIVG). Disulfide bonds link Cys-25–Cys-144 and Cys-62–Cys-193. Asp-52 serves as a coordination point for histamine. Heme contacts are provided by His-80 and Asn-91. Asp-154 is a histamine binding site.

Belongs to the calycin superfamily. Nitrophorin family. As to quaternary structure, forms oligomers (at pH 5.5). The cofactor is heme b. In terms of tissue distribution, expressed in the endothelial cells of the salivary glands.

The protein resides in the secreted. The enzyme catalyses 3 nitrite + 2 H(+) = 2 nitric oxide + nitrate + H2O. Functionally, converts nitrite as the sole substrate to form nitric oxide gas (NO). NO(2-) serves both as an electron donor and as an electron acceptor. Binds to negatively charged cell surfaces of activated platelets; binds to L-a-phosphatidyl-L-serine (PS)-bearing phospholipid membranes. Once bound on an activated platelet, NP7 releases its stored nitric oxide gas (NO) into the victim's tissues while feeding, resulting in vasodilation and inhibition of platelet aggregation. Also acts as an anticoagulant by blocking coagulation-factor binding sites. Has antihistamine activity; binds histamine with high affinity. In Rhodnius prolixus (Triatomid bug), this protein is Nitrophorin-7.